Here is a 309-residue protein sequence, read N- to C-terminus: Dihydroorotate dehydrogenase B (NAD(+)), catalytic subunit (309 aa).

FMN-binding positions include Ser-21 and Lys-45–Ala-46. Substrate-binding positions include Lys-45 and Asn-69 to Leu-73. FMN is bound by residues Asn-99 and Asn-127. Substrate is bound at residue Asn-127. Catalysis depends on Cys-130, which acts as the Nucleophile. FMN is bound by residues Lys-165 and Ile-191. Asn-192–Thr-193 contributes to the substrate binding site. Residues Gly-217, Gly-243–Gly-244, and Gly-265–Thr-266 contribute to the FMN site.

This sequence belongs to the dihydroorotate dehydrogenase family. Type 1 subfamily. Heterotetramer of 2 PyrK and 2 PyrD type B subunits. FMN serves as cofactor.

The protein localises to the cytoplasm. It carries out the reaction (S)-dihydroorotate + NAD(+) = orotate + NADH + H(+). It functions in the pathway pyrimidine metabolism; UMP biosynthesis via de novo pathway; orotate from (S)-dihydroorotate (NAD(+) route): step 1/1. Functionally, catalyzes the conversion of dihydroorotate to orotate with NAD(+) as electron acceptor. This is Dihydroorotate dehydrogenase B (NAD(+)), catalytic subunit (pyrD) from Bacillus cereus (strain AH187).